The sequence spans 215 residues: Adenylate kinase (215 aa).

10-15 (GAGKGT) is an ATP binding site. Positions 30–59 (STGDMLRAAVKAGTELGLKAKSVMDAGGLV) are NMP. AMP contacts are provided by residues threonine 31, arginine 36, 57–59 (GLV), 85–88 (GFPR), and glutamine 92. An LID region spans residues 122 to 159 (GRRVHPASGRVYHTEYNPPKVAGKDDVSGEELVQREDD). ATP is bound by residues arginine 123 and 132-133 (VY). Residues arginine 156 and arginine 167 each contribute to the AMP site. An ATP-binding site is contributed by glycine 201.

It belongs to the adenylate kinase family. As to quaternary structure, monomer.

The protein resides in the cytoplasm. It carries out the reaction AMP + ATP = 2 ADP. The protein operates within purine metabolism; AMP biosynthesis via salvage pathway; AMP from ADP: step 1/1. Catalyzes the reversible transfer of the terminal phosphate group between ATP and AMP. Plays an important role in cellular energy homeostasis and in adenine nucleotide metabolism. The sequence is that of Adenylate kinase from Ectopseudomonas mendocina (strain ymp) (Pseudomonas mendocina).